The sequence spans 207 residues: V-type ATP synthase subunit D (207 aa).

It belongs to the V-ATPase D subunit family.

Produces ATP from ADP in the presence of a proton gradient across the membrane. In Streptococcus gordonii (strain Challis / ATCC 35105 / BCRC 15272 / CH1 / DL1 / V288), this protein is V-type ATP synthase subunit D.